The chain runs to 922 residues: Pyruvate dehydrogenase E1 component (922 aa).

Homodimer. Part of an unusual ODH/PDH supercomplex, consisting of AceE (E1), AceF (E2), and Lpd (E3) together with OdhA (E1+E2). The cofactor is Mg(2+). Requires thiamine diphosphate as cofactor.

It carries out the reaction N(6)-[(R)-lipoyl]-L-lysyl-[protein] + pyruvate + H(+) = N(6)-[(R)-S(8)-acetyldihydrolipoyl]-L-lysyl-[protein] + CO2. In terms of biological role, is a specific component of the pyruvate dehydrogenase (PDH) complex, that catalyzes the overall conversion of pyruvate to acetyl-CoA and CO(2). AceE has reductase activity with pyruvate but does not react with 2-oxoglutarate. This chain is Pyruvate dehydrogenase E1 component (aceE), found in Corynebacterium glutamicum (strain ATCC 13032 / DSM 20300 / JCM 1318 / BCRC 11384 / CCUG 27702 / LMG 3730 / NBRC 12168 / NCIMB 10025 / NRRL B-2784 / 534).